A 186-amino-acid chain; its full sequence is UPF0200 protein PF1294 (186 aa).

7–14 provides a ligand contact to ATP; that stretch reads GMPGSGKG.

Belongs to the UPF0200 family.

The polypeptide is UPF0200 protein PF1294 (Pyrococcus furiosus (strain ATCC 43587 / DSM 3638 / JCM 8422 / Vc1)).